Consider the following 275-residue polypeptide: Shikimate dehydrogenase (NADP(+)) (275 aa).

Shikimate is bound by residues S17 to S19 and T64. Residue K68 is the Proton acceptor of the active site. E80 contributes to the NADP(+) binding site. The shikimate site is built by N89 and D105. NADP(+) is bound by residues G129–A133, N152–K157, and M216. A shikimate-binding site is contributed by Y218. An NADP(+)-binding site is contributed by G240.

The protein belongs to the shikimate dehydrogenase family. In terms of assembly, homodimer.

The catalysed reaction is shikimate + NADP(+) = 3-dehydroshikimate + NADPH + H(+). The protein operates within metabolic intermediate biosynthesis; chorismate biosynthesis; chorismate from D-erythrose 4-phosphate and phosphoenolpyruvate: step 4/7. Involved in the biosynthesis of the chorismate, which leads to the biosynthesis of aromatic amino acids. Catalyzes the reversible NADPH linked reduction of 3-dehydroshikimate (DHSA) to yield shikimate (SA). This is Shikimate dehydrogenase (NADP(+)) from Pectobacterium atrosepticum (strain SCRI 1043 / ATCC BAA-672) (Erwinia carotovora subsp. atroseptica).